The chain runs to 210 residues: Chaperone protein TorD (210 aa).

The protein belongs to the TorD/DmsD family. TorD subfamily.

It is found in the cytoplasm. Involved in the biogenesis of TorA. Acts on TorA before the insertion of the molybdenum cofactor and, as a result, probably favors a conformation of the apoenzyme that is competent for acquiring the cofactor. The protein is Chaperone protein TorD of Salmonella schwarzengrund (strain CVM19633).